We begin with the raw amino-acid sequence, 639 residues long: MIKVALKDGSIKEFENAISVMDVAKSISEGLARNVVAASVNGEVVGLDHIIDTDCDLNLFKFEDKEGKEVFRHTSAHILAQAIKRLYPEAKLAIGPSIENGFYYDIDLDHRLVPEDLEKIEAEMKKIAKEDLKIERFELPRNEALELMKEQGEDYKVELISDLPESEIISFYKQGDFTDLCRGPHLPSTKKVKAVKLQSVAGAYWRGDENNKMLQRIYGTSFEKNKDLEEYLHLLEEAKKRDHRKLGKELGLFMIPEEGPGFPMFLPKGMELKNELLKFWREIHRKAGYIEIESPIILNRKLWETSGHWYHYKENMYTVKIDDEDYAIKPMNCPGGLIYYNSQLHSYRDFPMRVAELGRVHRHELSGALQGLMRVRAFTQDDSHIFMLPEQIKDEIKGVANLIDGIYKTFGFEYNLELSTRPENSMGSDEEWEAAENGLREALEELGLPYTINEGDGAFYGPKIDFHLKDCLGRTWQCGTIQLDMQLPRQFDNTYIGQDGEKHRPVMIHRVAFGSIERFIGILIEHYAGKFPVWLSPTQVKILPISDKFMDYANEVKKELFDKGIRVELDDRAEKIGFKIREAQLEKVPYMLIVGEKEVADNNVSVRSRDKGEIGSIKLDEFIASISKEIESRESIIQD.

Residues 1 to 61 (MIKVALKDGS…DTDCDLNLFK (61 aa)) form the TGS domain. The segment at 242–532 (DHRKLGKELG…LIEHYAGKFP (291 aa)) is catalytic. The Zn(2+) site is built by C333, H384, and H509.

It belongs to the class-II aminoacyl-tRNA synthetase family. As to quaternary structure, homodimer. Zn(2+) serves as cofactor.

It is found in the cytoplasm. It carries out the reaction tRNA(Thr) + L-threonine + ATP = L-threonyl-tRNA(Thr) + AMP + diphosphate + H(+). In terms of biological role, catalyzes the attachment of threonine to tRNA(Thr) in a two-step reaction: L-threonine is first activated by ATP to form Thr-AMP and then transferred to the acceptor end of tRNA(Thr). Also edits incorrectly charged L-seryl-tRNA(Thr). The chain is Threonine--tRNA ligase from Clostridioides difficile (strain 630) (Peptoclostridium difficile).